We begin with the raw amino-acid sequence, 647 residues long: Zinc finger protein 567 (647 aa).

One can recognise a KRAB domain in the interval 32-77; that stretch reads MDVMLENYCHLISVGCHMTKPDVILKLERGEEPWTSFKGHTCLEEN. Residues Lys173, Lys202, and Lys217 each participate in a glycyl lysine isopeptide (Lys-Gly) (interchain with G-Cter in SUMO2) cross-link. The C2H2-type 1; degenerate zinc finger occupies 210–232; the sequence is FEYNDCEKAFLKRGGPVTHSRTY. C2H2-type zinc fingers lie at residues 253 to 275, 281 to 303, 309 to 331, 337 to 359, 365 to 387, 393 to 415, and 421 to 443; these read HTCT…QGIH, YQCH…QRTH, FVCN…QRTH, YECP…QRTH, YECS…QRIH, YICK…QRTH, and YICN…EKTH. Residue Lys447 forms a Glycyl lysine isopeptide (Lys-Gly) (interchain with G-Cter in SUMO2) linkage. C2H2-type zinc fingers lie at residues 449 to 471, 477 to 499, 505 to 527, 533 to 555, 561 to 583, 589 to 611, and 617 to 639; these read YICN…QRTH, YECP…HRTH, YECN…QRIH, YICN…QKIH, YECP…QRTH, and YKCS…QRTH.

This sequence belongs to the krueppel C2H2-type zinc-finger protein family.

It is found in the nucleus. Its function is as follows. May be involved in transcriptional regulation. This is Zinc finger protein 567 (ZNF567) from Bos taurus (Bovine).